A 134-amino-acid chain; its full sequence is Beta-synuclein (134 aa).

2 tandem repeats follow at residues 20-30 and 31-41. The 4 X 11 AA tandem repeats of [EGS]-K-T-K-[EQ]-[GQ]-V-X(4) stretch occupies residues 20 to 67; that stretch reads EKTKQGVTEAAEKTKEGVLYVGSKTREGVVQGVASVAEKTKEQASHLG. One copy of the 3; approximate repeat lies at 42–56; it reads SKTREGVVQGVASVA. Repeat unit 4 spans residues 57-67; it reads EKTKEQASHLG. Positions 89 to 134 are disordered; the sequence is FPTDLKPEEVAQEAAEEPLIEPLMEPEGESYEDPPQEEYQEYEPEA. The span at 98 to 134 shows a compositional bias: acidic residues; the sequence is VAQEAAEEPLIEPLMEPEGESYEDPPQEEYQEYEPEA. Serine 118 carries the phosphoserine; by BARK1, CK2 and GRK5 modification.

The protein belongs to the synuclein family. In terms of processing, phosphorylated. Phosphorylation by G-protein coupled receptor kinases (GRK) is more efficient than phosphorylation by CK1, CK2 and CaM-kinase II. Expressed predominantly in brain; concentrated in presynaptic nerve terminals.

The protein localises to the cytoplasm. Non-amyloid component of senile plaques found in Alzheimer disease. Could act as a regulator of SNCA aggregation process. Protects neurons from staurosporine and 6-hydroxy dopamine (6OHDA)-stimulated caspase activation in a p53/TP53-dependent manner. Contributes to restore the SNCA anti-apoptotic function abolished by 6OHDA. Not found in the Lewy bodies associated with Parkinson disease. The protein is Beta-synuclein (SNCB) of Homo sapiens (Human).